A 311-amino-acid polypeptide reads, in one-letter code: HPr kinase/phosphorylase (311 aa).

Catalysis depends on residues His138 and Lys159. ATP is bound at residue 153–160; that stretch reads GKSGVGKS. Position 160 (Ser160) interacts with Mg(2+). Asp177 acts as the Proton acceptor; for phosphorylation activity. Proton donor; for dephosphorylation activity in catalysis. Positions 201–210 are important for the catalytic mechanism of both phosphorylation and dephosphorylation; the sequence is LEIRGLGIIN. Glu202 is a Mg(2+) binding site. The active site involves Arg243. Residues 264–269 are important for the catalytic mechanism of dephosphorylation; sequence PVRPGR.

Belongs to the HPrK/P family. As to quaternary structure, homohexamer. Requires Mg(2+) as cofactor.

The catalysed reaction is [HPr protein]-L-serine + ATP = [HPr protein]-O-phospho-L-serine + ADP + H(+). The enzyme catalyses [HPr protein]-O-phospho-L-serine + phosphate + H(+) = [HPr protein]-L-serine + diphosphate. In terms of biological role, catalyzes the ATP- as well as the pyrophosphate-dependent phosphorylation of a specific serine residue in HPr, a phosphocarrier protein of the phosphoenolpyruvate-dependent sugar phosphotransferase system (PTS). HprK/P also catalyzes the pyrophosphate-producing, inorganic phosphate-dependent dephosphorylation (phosphorolysis) of seryl-phosphorylated HPr (P-Ser-HPr). The two antagonistic activities of HprK/P are regulated by several intracellular metabolites, which change their concentration in response to the absence or presence of rapidly metabolisable carbon sources (glucose, fructose, etc.) in the growth medium. Also phosphorylates/dephosphorylates the HPr-like catabolite repression protein crh on a specific serine residue. Therefore, by controlling the phosphorylation state of HPr and crh, HPrK/P is a sensor enzyme that plays a major role in the regulation of carbon metabolism and sugar transport: it mediates carbon catabolite repression (CCR), and regulates PTS-catalyzed carbohydrate uptake and inducer exclusion. The polypeptide is HPr kinase/phosphorylase (Geobacillus sp. (strain WCH70)).